The primary structure comprises 1246 residues: Stromal processing peptidase, chloroplastic (1246 aa).

A chloroplast-targeting transit peptide spans 1 to 136 (MASFPSPPLA…AKIRRRHVLH (136 aa)). Residue His228 coordinates Zn(2+). Catalysis depends on Glu231, which acts as the Proton acceptor. His232 is a binding site for Zn(2+). Residue Glu302 is part of the active site. Zn(2+) is bound at residue Glu309.

The protein belongs to the peptidase M16 family. Zn(2+) is required as a cofactor. In terms of tissue distribution, widely expressed.

It is found in the plastid. The protein localises to the chloroplast stroma. Functionally, cleaves presequences (transit peptides) from chloroplastic protein precursors. Initially recognizes a precursor by binding to the C-terminus of its transit peptide and then removes the transit peptide in a single endoproteolytic step. In a next step, pursues the cleavage of transit peptide to a subfragment form. This chain is Stromal processing peptidase, chloroplastic, found in Oryza sativa subsp. indica (Rice).